A 355-amino-acid polypeptide reads, in one-letter code: Lipoyl synthase (355 aa).

An RPE1 insert domain is found at 7-55; that stretch reads HLSKFAYREEFAGNTEVLATAAYKEDCADASTGLTPKLPLEVEFGKMSK. Residues C86, C91, C97, C112, C116, C119, and S325 each coordinate [4Fe-4S] cluster. A Radical SAM core domain is found at 98-314; the sequence is WSKKHATVMI…ERVARTKGFL (217 aa).

It belongs to the radical SAM superfamily. Lipoyl synthase family. [4Fe-4S] cluster is required as a cofactor.

It is found in the cytoplasm. It carries out the reaction [[Fe-S] cluster scaffold protein carrying a second [4Fe-4S](2+) cluster] + N(6)-octanoyl-L-lysyl-[protein] + 2 oxidized [2Fe-2S]-[ferredoxin] + 2 S-adenosyl-L-methionine + 4 H(+) = [[Fe-S] cluster scaffold protein] + N(6)-[(R)-dihydrolipoyl]-L-lysyl-[protein] + 4 Fe(3+) + 2 hydrogen sulfide + 2 5'-deoxyadenosine + 2 L-methionine + 2 reduced [2Fe-2S]-[ferredoxin]. The protein operates within protein modification; protein lipoylation via endogenous pathway; protein N(6)-(lipoyl)lysine from octanoyl-[acyl-carrier-protein]: step 2/2. Catalyzes the radical-mediated insertion of two sulfur atoms into the C-6 and C-8 positions of the octanoyl moiety bound to the lipoyl domains of lipoate-dependent enzymes, thereby converting the octanoylated domains into lipoylated derivatives. The polypeptide is Lipoyl synthase (Rickettsia bellii (strain RML369-C)).